We begin with the raw amino-acid sequence, 523 residues long: Succinate-semialdehyde dehydrogenase, mitochondrial (523 aa).

The transit peptide at 1–35 (MATCFLLRNFCAARPALRPPGRLLREPAGAQRRSY) directs the protein to the mitochondrion. N6-acetyllysine; alternate is present on Lys114. The residue at position 114 (Lys114) is an N6-succinyllysine; alternate. Lys123 and Lys172 each carry N6-succinyllysine. NAD(+)-binding positions include Arg201 and 216-219 (KPAE). Arg201 contributes to the substrate binding site. Lys253 carries the N6-acetyllysine; alternate modification. Lys253 carries the post-translational modification N6-succinyllysine; alternate. 272-277 (GSTATG) is an NAD(+) binding site. The Proton acceptor role is filled by Glu294. A substrate-binding site is contributed by Arg322. Cys328 functions as the Nucleophile in the catalytic mechanism. An intrachain disulfide couples Cys328 to Cys330. At Lys353 the chain carries N6-acetyllysine. Lys390 is modified (N6-succinyllysine). Lys399 carries the N6-acetyllysine modification. Ser486 provides a ligand contact to substrate. Ser487 is modified (phosphoserine).

The protein belongs to the aldehyde dehydrogenase family. As to quaternary structure, homotetramer. Brain, pancreas, heart, liver, skeletal muscle, kidney. Lower in spleen, lung, kidney and testis.

The protein localises to the mitochondrion. The catalysed reaction is succinate semialdehyde + NAD(+) + H2O = succinate + NADH + 2 H(+). The protein operates within amino-acid degradation; 4-aminobutanoate degradation. Redox-regulated. Inhibited under oxydizing conditions. Catalyzes one step in the degradation of the inhibitory neurotransmitter gamma-aminobutyric acid (GABA). This is Succinate-semialdehyde dehydrogenase, mitochondrial (Aldh5a1) from Rattus norvegicus (Rat).